The sequence spans 177 residues: Large ribosomal subunit protein uL6 (177 aa).

Belongs to the universal ribosomal protein uL6 family. In terms of assembly, part of the 50S ribosomal subunit.

Its function is as follows. This protein binds to the 23S rRNA, and is important in its secondary structure. It is located near the subunit interface in the base of the L7/L12 stalk, and near the tRNA binding site of the peptidyltransferase center. The chain is Large ribosomal subunit protein uL6 from Cereibacter sphaeroides (strain ATCC 17029 / ATH 2.4.9) (Rhodobacter sphaeroides).